We begin with the raw amino-acid sequence, 326 residues long: Peroxidase 46 (326 aa).

The first 27 residues, 1-27 (MASSYRINCSTLLHLLMFLSSLLTSSA), serve as a signal peptide directing secretion. Asn28 carries an N-linked (GlcNAc...) asparagine glycan. Disulfide bonds link Cys38–Cys114, Cys71–Cys76, Cys120–Cys322, and Cys199–Cys233. The active-site Proton acceptor is the His69. Residues Asp70, Val73, Gly75, Asp77, and Ser79 each coordinate Ca(2+). N-linked (GlcNAc...) asparagine glycosylation occurs at Asn85. His192 contacts heme b. Thr193 is a binding site for Ca(2+). Asp246, Thr249, and Asp254 together coordinate Ca(2+). Residue Asn278 is glycosylated (N-linked (GlcNAc...) asparagine).

Belongs to the peroxidase family. Classical plant (class III) peroxidase subfamily. Heme b serves as cofactor. The cofactor is Ca(2+).

It is found in the secreted. The catalysed reaction is 2 a phenolic donor + H2O2 = 2 a phenolic radical donor + 2 H2O. Functionally, removal of H(2)O(2), oxidation of toxic reductants, biosynthesis and degradation of lignin, suberization, auxin catabolism, response to environmental stresses such as wounding, pathogen attack and oxidative stress. These functions might be dependent on each isozyme/isoform in each plant tissue. The polypeptide is Peroxidase 46 (PER46) (Arabidopsis thaliana (Mouse-ear cress)).